A 525-amino-acid polypeptide reads, in one-letter code: G-protein regulator 2 (525 aa).

One can recognise a GoLoco domain in the interval Pro424–Leu445. Positions Thr489–Lys525 are disordered.

As to quaternary structure, interacts with gpr-1; gpr-1 forms a complex with lin-5 and GDP-bound goa-1.

The protein resides in the cytoplasm. Its subcellular location is the cell cortex. It localises to the cytoskeleton. It is found in the spindle. Functionally, in the 1-cell embryo, probably together with gpr-1, controls nuclear rotation and spindle elongation during mitosis. Complex of gpr-1 and gpr-2, in association with lin-5, activates G-protein signaling to affect mitotic spindle force. Polarity determinants (par genes) may regulate lin-5/gpr-1/gpr-2/goa-1 locally to create the asymmetric forces that drive spindle movement. In Caenorhabditis elegans, this protein is G-protein regulator 2 (gpr-2).